A 125-amino-acid chain; its full sequence is MAVCIIDHDNIRGVIYFEPVHGKDKVLGSVIGLKSGTYSLIIHRYGDISQGCDSIGSPEIFIGNIFVNRYGVAYVYLDTDVNISTIIGKALSISKNDQRLACGVIGISYINEKIIHFLTINENGV.

Residues Cys52 and Cys102 are joined by a disulfide bond.

It belongs to the Cu-Zn superoxide dismutase family.

It is found in the virion. It localises to the host cytoplasm. In terms of biological role, superoxide dismutase-like protein with no enzymatic activity. This chain is Cu-Zn superoxide dismutase-like protein OPG175 (OPG175), found in Vaccinia virus (strain Western Reserve) (VACV).